The following is a 254-amino-acid chain: Serotonin N-acetyltransferase 1, chloroplastic (254 aa).

Residues 1-74 constitute a chloroplast transit peptide; the sequence is MAPAASASAS…LRSGFLKSNN (74 aa). One can recognise an N-acetyltransferase domain in the interval 111 to 254; the sequence is IIFSSAGDVN…IKGMFWYPRF (144 aa).

Belongs to the acetyltransferase family. In terms of tissue distribution, expressed in roots and shoots.

The protein localises to the plastid. Its subcellular location is the chloroplast. The protein resides in the nucleus. It carries out the reaction serotonin + acetyl-CoA = N-acetylserotonin + CoA + H(+). The enzyme catalyses tyramine + acetyl-CoA = N-acetyltyramine + CoA + H(+). It catalyses the reaction tryptamine + acetyl-CoA = N-acetyltryptamine + CoA + H(+). The catalysed reaction is 5-methoxytryptamine + acetyl-CoA = melatonin + CoA + H(+). The protein operates within aromatic compound metabolism; melatonin biosynthesis; melatonin from serotonin: step 1/2. In terms of biological role, catalyzes the N-acetylation of serotonin into N-acetylserotonin, the penultimate step in the synthesis of melatonin. Catalyzes in vitro the N-acetylation of tryptamine to produce N-acetyltryptamine, 5-methoxytryptamine to produce melatonin and tyramine to produce N-acetyltyramine. The protein is Serotonin N-acetyltransferase 1, chloroplastic of Oryza sativa subsp. japonica (Rice).